The primary structure comprises 816 residues: Sodium/hydrogen exchanger 1 (816 aa).

At 1–98 the chain is on the extracellular side; that stretch reads MLLWSAVRGL…FPVLGIDYTH (98 aa). Polar residues predominate over residues 37–50; that stretch reads LQLSPTDSTTPDSQ. Residues 37 to 79 form a disordered region; the sequence is LQLSPTDSTTPDSQPSRERSIGDVTTAPPEVTPESRPVNRSVT. The N-linked (GlcNAc...) asparagine glycan is linked to N75. A helical transmembrane segment spans residues 99 to 121; it reads VRTPFEISLWILLACLMKIGFHV. The Cytoplasmic segment spans residues 122–130; that stretch reads IPTISSIVP. A helical membrane pass occupies residues 131-148; the sequence is ESCLLIVVGLLVGGLIKG. Residues 149 to 158 are Extracellular-facing; the sequence is VGEKPPFLQS. Residues 159–176 traverse the membrane as a helical segment; that stretch reads EVFFLFLLPPIILDAGYF. At 177–186 the chain is on the cytoplasmic side; that stretch reads LPLRQFTENL. A helical transmembrane segment spans residues 187–215; sequence GTILIFAVVGTLWNAFFLGGLMYAVCLVG. Residues 216-222 lie on the Extracellular side of the membrane; the sequence is GEQINNI. A helical membrane pass occupies residues 223–249; that stretch reads GLLDNLLFGSIISAVDPVAVLAVFEEI. At 250-252 the chain is on the cytoplasmic side; that stretch reads HIN. A helical membrane pass occupies residues 253-283; the sequence is ELLHILVFGESLLNDAVTVVLYHLFEEFANY. The Extracellular portion of the chain corresponds to 284 to 287; that stretch reads DHVG. The chain crosses the membrane as a helical span at residues 288 to 322; the sequence is IVDIVLGFLSFFVVALGGVFVGVVYGVIAAFTSRF. The Cytoplasmic segment spans residues 323 to 328; it reads TAHIRV. The chain crosses the membrane as a helical span at residues 329 to 341; that stretch reads IEPLFVFLYSYMA. At 342-350 the chain is on the extracellular side; that stretch reads YLSAELFHL. Residues 351–371 form a helical membrane-spanning segment; sequence SGIMALIASGVVMRPYVEANI. The Cytoplasmic segment spans residues 372-373; the sequence is SH. A helical membrane pass occupies residues 374–404; that stretch reads KSHTTIKYFLKMWSSVSETLIFIFLGVSTVA. The Extracellular segment spans residues 405 to 410; that stretch reads GSHHWN. Residues 411–438 form a helical membrane-spanning segment; sequence WTFVISTLLFCLIARVLGVLGLTWFINK. The Cytoplasmic portion of the chain corresponds to 439-444; that stretch reads FRIVKL. A helical transmembrane segment spans residues 445 to 469; the sequence is TPKDQFIIAYGGLRGAIAFSLGYLL. At 470 to 475 the chain is on the extracellular side; it reads DKKHFP. A helical transmembrane segment spans residues 476–505; the sequence is MCDLFLTAIITVIFFTVFVQGMTIRPLVDL. The segment at 503–545 is interaction with TESC; that stretch reads VDLLAVKKKQETKRSINEEIHTQFLDHLLTGIEDICGHYGHHH. Over 506 to 816 the chain is Cytoplasmic; sequence LAVKKKQETK…EGEPFIPKGQ (311 aa). The tract at residues 509–516 is PI(4,5)P2-binding region; the sequence is KKKQETKR. The interaction with CHP2 stretch occupies residues 515 to 545; it reads KRSINEEIHTQFLDHLLTGIEDICGHYGHHH. Residues 540–545 are confers pH-dependent PI(4,5)P2 binding; it reads HYGHHH. A PI(4,5)P2-binding region region spans residues 552 to 560; the sequence is RFNKKYVKK. A phosphoserine mark is found at S599 and S602. T603 carries the phosphothreonine modification. Phosphoserine is present on residues S605 and S648. An interaction with TESC region spans residues 633–816; it reads KILRNNLQKT…EGEPFIPKGQ (184 aa). Residues 633 to 816 form an interaction with CALM1 region; sequence KILRNNLQKT…EGEPFIPKGQ (184 aa). Residues 684-687 are interaction with PPP3CA; sequence LTVP. Phosphoserine is present on residues S693, S697, and S703. The interaction with PPP3CA stretch occupies residues 715 to 720; the sequence is PVITID. S723, S726, S729, S786, S788, and S797 each carry phosphoserine. Positions 748 to 816 are disordered; it reads PRVAEEAAEE…EGEPFIPKGQ (69 aa). The segment covering 783–792 has biased composition (polar residues); the sequence is PSDSPSSQRM.

The protein belongs to the monovalent cation:proton antiporter 1 (CPA1) transporter (TC 2.A.36) family. In terms of assembly, homodimer; dimerization is crucial for its function. Oligomer. Interacts with CALM in a calcium-dependent manner. Interacts with TESC. Interacts (via the juxtamembrane region of the cytoplasmic C-terminal domain) with CHP1; the interaction occurs at the plasma membrane in a calcium-dependent manner. Interacts with CHP2; the interaction occurs in a calcium-dependent manner. Interacts with EZR; regulates the cytoskeletal interactions of SLC9A1 and promotes stress fiber formation. Ubiquitinated, leading to its degradation by the proteasome. Ubiquitination is reduced by CHP1. In terms of processing, O-glycosylated. Post-translationally, palmitoylated; may play a major role in SLC9A1 regulation. Phosphorylation at Ser-648 by AKT1 reduces SLC9A1 binding to CALM1. Kidney and intestine.

It localises to the cell membrane. The protein resides in the basolateral cell membrane. It catalyses the reaction Na(+)(in) + H(+)(out) = Na(+)(out) + H(+)(in). It carries out the reaction Li(+)(out) + H(+)(in) = Li(+)(in) + H(+)(out). The enzyme catalyses Li(+)(in) + Na(+)(out) = Li(+)(out) + Na(+)(in). Its activity is regulated as follows. Activated at acidic pHs. Inhibited by cariporide and eniporide. Phosphatidylinositol 4,5-bisphosphate (PI(4,5)P2) and phosphatidylinositol 3,4,5-trisphosphate (PI(3,4,5)P3) bind and differentially regulate SLC9A1 activity. Functionally, electroneutral Na(+) /H(+) antiporter that extrudes Na(+) in exchange for external protons driven by the inward sodium ion chemical gradient, protecting cells from acidification that occurs from metabolism. Exchanges intracellular H(+) ions for extracellular Na(+) in 1:1 stoichiometry. Plays a key role in maintening intracellular pH neutral and cell volume, and thus is important for cell growth, proliferation, migration and survival. In addition, can transport lithium Li(+) and functions also as a Na(+)/Li(+) antiporter. SLC9A1 also functions in membrane anchoring and organization of scaffolding complexes that coordinate signaling inputs. The sequence is that of Sodium/hydrogen exchanger 1 (SLC9A1) from Oryctolagus cuniculus (Rabbit).